We begin with the raw amino-acid sequence, 450 residues long: Signal recognition particle 54 kDa protein (450 aa).

GTP-binding positions include 107–114 (GIQGSGKT), 188–192 (DTAGR), and 247–250 (TKLD).

It belongs to the GTP-binding SRP family. SRP54 subfamily. As to quaternary structure, part of the signal recognition particle protein translocation system, which is composed of SRP and FtsY. Archaeal SRP consists of a 7S RNA molecule of 300 nucleotides and two protein subunits: SRP54 and SRP19.

Its subcellular location is the cytoplasm. It catalyses the reaction GTP + H2O = GDP + phosphate + H(+). In terms of biological role, involved in targeting and insertion of nascent membrane proteins into the cytoplasmic membrane. Binds to the hydrophobic signal sequence of the ribosome-nascent chain (RNC) as it emerges from the ribosomes. The SRP-RNC complex is then targeted to the cytoplasmic membrane where it interacts with the SRP receptor FtsY. The protein is Signal recognition particle 54 kDa protein of Methanococcus maripaludis (strain DSM 14266 / JCM 13030 / NBRC 101832 / S2 / LL).